Reading from the N-terminus, the 165-residue chain is C-phycoerythrin class 2 subunit alpha (165 aa).

A phycourobilin-binding site is contributed by Cys-75. 2 residues coordinate (2R,3E)-phycoerythrobilin: Cys-83 and Cys-140.

Belongs to the phycobiliprotein family. Heterodimer of an alpha and a beta chain. In terms of processing, contains two covalently linked phycoerythrobilin chromophores and one covalently linked phycourobilin chromophore.

It localises to the cellular thylakoid membrane. In terms of biological role, light-harvesting photosynthetic bile pigment-protein from the phycobiliprotein complex. The chain is C-phycoerythrin class 2 subunit alpha (mpeA) from Synechococcus sp. (strain WH8020).